Consider the following 456-residue polypeptide: Divalent metal cation transporter MntH (456 aa).

11 helical membrane-spanning segments follow: residues 47 to 67 (ALSF…PGNW), 77 to 97 (FGYA…LLQA), 123 to 143 (AWPL…AEVI), 151 to 171 (LLFG…VLLV), 184 to 204 (ALII…IIMA), 227 to 247 (MLYI…LYLH), 276 to 296 (IALT…AASF), 316 to 336 (PLLG…CCGL), 369 to 389 (FVAI…GTTE), 392 to 412 (ILSQ…LVIF), and 422 to 442 (LAAA…IVVL).

The protein belongs to the NRAMP family.

It localises to the cell inner membrane. Functionally, h(+)-stimulated, divalent metal cation uptake system. The polypeptide is Divalent metal cation transporter MntH (Brucella suis biovar 1 (strain 1330)).